The sequence spans 943 residues: Valine--tRNA ligase (943 aa).

The 'HIGH' region signature appears at 45 to 55 (PNVTGTLHMGH). Residues 541-545 (KMSKS) carry the 'KMSKS' region motif. Position 544 (lysine 544) interacts with ATP. Residues 875 to 934 (IDVAAERIRLAKEIEKLEKQISIAQGKLANEGFVARAPAAVIDQEKQRVADFTATLEQLK) adopt a coiled-coil conformation.

The protein belongs to the class-I aminoacyl-tRNA synthetase family. ValS type 1 subfamily. In terms of assembly, monomer.

The protein localises to the cytoplasm. It catalyses the reaction tRNA(Val) + L-valine + ATP = L-valyl-tRNA(Val) + AMP + diphosphate. Catalyzes the attachment of valine to tRNA(Val). As ValRS can inadvertently accommodate and process structurally similar amino acids such as threonine, to avoid such errors, it has a 'posttransfer' editing activity that hydrolyzes mischarged Thr-tRNA(Val) in a tRNA-dependent manner. The sequence is that of Valine--tRNA ligase from Dechloromonas aromatica (strain RCB).